Reading from the N-terminus, the 272-residue chain is Hydroxyethylthiazole kinase (272 aa).

Methionine 46 is a substrate binding site. ATP-binding residues include arginine 122 and threonine 168. Glycine 195 is a binding site for substrate.

The protein belongs to the Thz kinase family. Mg(2+) serves as cofactor.

The catalysed reaction is 5-(2-hydroxyethyl)-4-methylthiazole + ATP = 4-methyl-5-(2-phosphooxyethyl)-thiazole + ADP + H(+). The protein operates within cofactor biosynthesis; thiamine diphosphate biosynthesis; 4-methyl-5-(2-phosphoethyl)-thiazole from 5-(2-hydroxyethyl)-4-methylthiazole: step 1/1. In terms of biological role, catalyzes the phosphorylation of the hydroxyl group of 4-methyl-5-beta-hydroxyethylthiazole (THZ). The protein is Hydroxyethylthiazole kinase of Alkaliphilus metalliredigens (strain QYMF).